A 355-amino-acid polypeptide reads, in one-letter code: UDP-3-O-acylglucosamine N-acyltransferase (355 aa).

Histidine 258 (proton acceptor) is an active-site residue.

Belongs to the transferase hexapeptide repeat family. LpxD subfamily. Homotrimer.

The catalysed reaction is a UDP-3-O-[(3R)-3-hydroxyacyl]-alpha-D-glucosamine + a (3R)-hydroxyacyl-[ACP] = a UDP-2-N,3-O-bis[(3R)-3-hydroxyacyl]-alpha-D-glucosamine + holo-[ACP] + H(+). It functions in the pathway bacterial outer membrane biogenesis; LPS lipid A biosynthesis. Its function is as follows. Catalyzes the N-acylation of UDP-3-O-acylglucosamine using 3-hydroxyacyl-ACP as the acyl donor. Is involved in the biosynthesis of lipid A, a phosphorylated glycolipid that anchors the lipopolysaccharide to the outer membrane of the cell. The sequence is that of UDP-3-O-acylglucosamine N-acyltransferase from Rhizobium rhizogenes (strain K84 / ATCC BAA-868) (Agrobacterium radiobacter).